A 52-amino-acid chain; its full sequence is Venom peptide 4b (52 aa).

A signal peptide spans 1–23 (MRSAILLVIVAIVAILGFLGVNA). AXPX repeat units lie at residues 23 to 26 (AEPL), 31 to 34 (AEPN), and 39 to 42 (AAPL). Positions 24 to 41 (EPLPSPLAEPNPHAKAAP) are excised as a propeptide. Residues 30-52 (LAEPNPHAKAAPLSPAAMASLAG) are disordered. The segment covering 37-52 (AKAAPLSPAAMASLAG) has biased composition (low complexity). Alanine 51 is modified (alanine amide).

Expressed by the venom gland.

It is found in the secreted. This is Venom peptide 4b from Eumenes pomiformis (Potter wasp).